Here is an 838-residue protein sequence, read N- to C-terminus: Probable beta-glucosidase I (838 aa).

Asn-197 is a glycosylation site (N-linked (GlcNAc...) asparagine). Asp-225 is an active-site residue. The 161-residue stretch at 395–555 (DGKKGFKFRV…SQEELISKAA (161 aa)) folds into the PA14 domain. An N-linked (GlcNAc...) asparagine glycan is attached at Asn-493.

The protein belongs to the glycosyl hydrolase 3 family.

It is found in the secreted. The enzyme catalyses Hydrolysis of terminal, non-reducing beta-D-glucosyl residues with release of beta-D-glucose.. It functions in the pathway glycan metabolism; cellulose degradation. Functionally, beta-glucosidases are one of a number of cellulolytic enzymes involved in the degradation of cellulosic biomass. Catalyzes the last step releasing glucose from the inhibitory cellobiose. The chain is Probable beta-glucosidase I (bglI) from Neosartorya fischeri (strain ATCC 1020 / DSM 3700 / CBS 544.65 / FGSC A1164 / JCM 1740 / NRRL 181 / WB 181) (Aspergillus fischerianus).